A 387-amino-acid polypeptide reads, in one-letter code: MKFVDEVEIRVEAGDGGNGCVSFRKEKFIEYGGPNGGDGGDGGDVYLMADEGLNTLIDYRFERFHRAKRGQNGQPQNCTGKGSEDLVLKVPVGTRAVDQDTGEQIGDLTYKGQKMLVAKGGWHGLGNLRFKSSTNRSPRQRTDGTPGEIRSLKLELLLLADVGLLGLPNAGKSTLIRSVSAATPKVADYPFTTLVPNLGVVRLDTQRSFVIADIPGIIEGAADGAGLGTQFLKHLERCRILLHVIDIMPVDGSDPLENAKVIISELEQHNEKLAGKPRWVVFNKLDLVLEEEAKEITDAIIAGLDWKGEVHSISAFNRSGTKELTQKVMTFIEELPPEEEEVIDGKTVEFKWDTYHEETIAAHSQDDDLDDDDWDEDDYDVEVEYRQ.

Residues 1-159 enclose the Obg domain; sequence MKFVDEVEIR…RSLKLELLLL (159 aa). Positions 160–333 constitute an OBG-type G domain; it reads ADVGLLGLPN…LTQKVMTFIE (174 aa). GTP is bound by residues 166 to 173, 191 to 195, 213 to 216, 283 to 286, and 314 to 316; these read GLPNAGKS, FTTLV, DIPG, NKLD, and SAF. 2 residues coordinate Mg(2+): Ser-173 and Thr-193. The disordered stretch occupies residues 361 to 387; it reads AAHSQDDDLDDDDWDEDDYDVEVEYRQ. Acidic residues predominate over residues 367 to 387; that stretch reads DDLDDDDWDEDDYDVEVEYRQ.

Belongs to the TRAFAC class OBG-HflX-like GTPase superfamily. OBG GTPase family. Monomer. Mg(2+) serves as cofactor.

It is found in the cytoplasm. In terms of biological role, an essential GTPase which binds GTP, GDP and possibly (p)ppGpp with moderate affinity, with high nucleotide exchange rates and a fairly low GTP hydrolysis rate. Plays a role in control of the cell cycle, stress response, ribosome biogenesis and in those bacteria that undergo differentiation, in morphogenesis control. This is GTPase Obg from Colwellia psychrerythraea (strain 34H / ATCC BAA-681) (Vibrio psychroerythus).